The sequence spans 452 residues: Probable carboxypeptidase ACLA_088580 (452 aa).

A signal peptide spans 1–18; the sequence is MRSLTLLLSLSTALRSVA. Asn-107 and Asn-156 each carry an N-linked (GlcNAc...) asparagine glycan. Asp-175 contacts Zn(2+). The Proton acceptor role is filled by Glu-207. Residue Glu-208 coordinates Zn(2+).

This sequence belongs to the peptidase M20A family. Zn(2+) serves as cofactor.

Its subcellular location is the secreted. The chain is Probable carboxypeptidase ACLA_088580 from Aspergillus clavatus (strain ATCC 1007 / CBS 513.65 / DSM 816 / NCTC 3887 / NRRL 1 / QM 1276 / 107).